A 231-amino-acid chain; its full sequence is Lipoprotein-releasing system ATP-binding protein LolD (231 aa).

The region spanning 11-231 (LRLEGLTRRF…TLRDGKLVPF (221 aa)) is the ABC transporter domain. Residue 47 to 54 (APSGTGKS) participates in ATP binding.

The protein belongs to the ABC transporter superfamily. Lipoprotein translocase (TC 3.A.1.125) family. As to quaternary structure, the complex is composed of two ATP-binding proteins (LolD) and two transmembrane proteins (LolC and LolE).

It is found in the cell inner membrane. Its function is as follows. Part of the ABC transporter complex LolCDE involved in the translocation of mature outer membrane-directed lipoproteins, from the inner membrane to the periplasmic chaperone, LolA. Responsible for the formation of the LolA-lipoprotein complex in an ATP-dependent manner. The polypeptide is Lipoprotein-releasing system ATP-binding protein LolD (Gluconobacter oxydans (strain 621H) (Gluconobacter suboxydans)).